A 536-amino-acid chain; its full sequence is Phosphoenolpyruvate carboxykinase (ATP) (536 aa).

Substrate-binding residues include arginine 61, tyrosine 195, and lysine 201. ATP is bound by residues lysine 201, histidine 220, and 236–244; that span reads GLSGTGKTT. Mn(2+) is bound by residues lysine 201 and histidine 220. Position 257 (aspartate 257) interacts with Mn(2+). Glutamate 285, arginine 322, and threonine 447 together coordinate ATP. Residue arginine 322 coordinates substrate.

The protein belongs to the phosphoenolpyruvate carboxykinase (ATP) family. Mn(2+) is required as a cofactor.

It localises to the cytoplasm. It carries out the reaction oxaloacetate + ATP = phosphoenolpyruvate + ADP + CO2. It participates in carbohydrate biosynthesis; gluconeogenesis. In terms of biological role, involved in the gluconeogenesis. Catalyzes the conversion of oxaloacetate (OAA) to phosphoenolpyruvate (PEP) through direct phosphoryl transfer between the nucleoside triphosphate and OAA. This Brucella anthropi (strain ATCC 49188 / DSM 6882 / CCUG 24695 / JCM 21032 / LMG 3331 / NBRC 15819 / NCTC 12168 / Alc 37) (Ochrobactrum anthropi) protein is Phosphoenolpyruvate carboxykinase (ATP).